A 357-amino-acid polypeptide reads, in one-letter code: DENN domain-containing protein 10 (357 aa).

Positions 1–136 (MAAVVAMDTQ…IAVLTKGICQ (136 aa)) constitute a uDENN domain. Residues 152-299 (KAYLAGSIKD…PEKSDSQVIQ (148 aa)) enclose the cDENN domain. The region spanning 301 to 357 (IALKTKEIFTHLAPFSEVSDDGGKVILNVEALKQQRFPPATENFLYHLAAAEQMLKV) is the dDENN domain.

The protein belongs to the DENND10 family. Interacts with the coiled-coil heterodimer of CCDC22 and CCDC93; the interaction is direct. Interacts with RAB27A and RAB27B (GDP-bound forms preferentially).

It is found in the late endosome. In terms of biological role, guanine nucleotide exchange factor (GEF) regulating homeostasis of late endocytic pathway, including endosomal positioning, maturation and secretion, possibly through activating Rab proteins such as RAB27A and RAB27B. Promotes the exchange of GDP to GTP, converting inactive GDP-bound RAB27A and RAB27B into their active GTP-bound form. The chain is DENN domain-containing protein 10 from Mus musculus (Mouse).